A 1221-amino-acid chain; its full sequence is DNA-directed RNA polymerase subunit beta' (1221 aa).

Residues C60, C62, C75, and C78 each contribute to the Zn(2+) site. 3 residues coordinate Mg(2+): D449, D451, and D453. The Zn(2+) site is built by C821, C896, C903, and C906.

The protein belongs to the RNA polymerase beta' chain family. As to quaternary structure, the RNAP catalytic core consists of 2 alpha, 1 beta, 1 beta' and 1 omega subunit. When a sigma factor is associated with the core the holoenzyme is formed, which can initiate transcription. It depends on Mg(2+) as a cofactor. Zn(2+) serves as cofactor.

The catalysed reaction is RNA(n) + a ribonucleoside 5'-triphosphate = RNA(n+1) + diphosphate. DNA-dependent RNA polymerase catalyzes the transcription of DNA into RNA using the four ribonucleoside triphosphates as substrates. The protein is DNA-directed RNA polymerase subunit beta' of Lactobacillus delbrueckii subsp. bulgaricus (strain ATCC BAA-365 / Lb-18).